Reading from the N-terminus, the 295-residue chain is Ribosomal protein L11 methyltransferase (295 aa).

Positions 146, 167, 189, and 231 each coordinate S-adenosyl-L-methionine.

Belongs to the methyltransferase superfamily. PrmA family.

It is found in the cytoplasm. It catalyses the reaction L-lysyl-[protein] + 3 S-adenosyl-L-methionine = N(6),N(6),N(6)-trimethyl-L-lysyl-[protein] + 3 S-adenosyl-L-homocysteine + 3 H(+). Its function is as follows. Methylates ribosomal protein L11. This Vibrio cholerae serotype O1 (strain ATCC 39541 / Classical Ogawa 395 / O395) protein is Ribosomal protein L11 methyltransferase.